A 344-amino-acid polypeptide reads, in one-letter code: uncharacterized protein (344 aa).

This sequence belongs to the glycosyltransferase 28 family.

This is an uncharacterized protein from Methanopyrus kandleri (strain AV19 / DSM 6324 / JCM 9639 / NBRC 100938).